The following is a 209-amino-acid chain: Ribosomal RNA large subunit methyltransferase E (209 aa).

Residues Gly63, Trp65, Asp83, Asp99, and Asp124 each contribute to the S-adenosyl-L-methionine site. The active-site Proton acceptor is the Lys164.

Belongs to the class I-like SAM-binding methyltransferase superfamily. RNA methyltransferase RlmE family.

It is found in the cytoplasm. The enzyme catalyses uridine(2552) in 23S rRNA + S-adenosyl-L-methionine = 2'-O-methyluridine(2552) in 23S rRNA + S-adenosyl-L-homocysteine + H(+). Its function is as follows. Specifically methylates the uridine in position 2552 of 23S rRNA at the 2'-O position of the ribose in the fully assembled 50S ribosomal subunit. This Aliivibrio fischeri (strain ATCC 700601 / ES114) (Vibrio fischeri) protein is Ribosomal RNA large subunit methyltransferase E.